Consider the following 542-residue polypeptide: MSSSDRDIIDIESGEEDLYSDGGNDIIDIESGEEDLYSDGGNVSDDYNPVDDTISRSEKSYVVVKEEDILKLQRDDIEQVSTVLSVSQVESIVLLLHYHWCVSKLEDEWFTDEERIRKTVGILKEPVVDVNGTEVDIQCGICFESYTRKEIARVSCGHPYCKTCWTGYITTKIEDGPGCLRVKCPEPSCYAVVGQDMIDEVTEKKDKDKYYRYFLRSYVEDGKKMKWCPSPGCEYAVEFGVNGSSSYDVSCLCSYKFCWNCCEDAHSPVDCETVSKWLLKNKDESENMNWILAKTKPCPKCKRPIEKNTGCNHMSCSAPCRHYFCWACLQPLSDHKACNAFKADNEDETKRKRAKDAIDRYTHFYERWAFNQSSRLKAMSDLEKWQSVELKQLSDIQSTPETQLSFTVDAWLQIIECRRVLKWTYAYGYYILSQERNKRVFARTFSLSCCSAEAENGLERLHHCAEEELKQFIGKIEDPSKNFGELRAKLIDLTKATKTYFENLVKALENGLVDVAYNESQSIEEPESFTKRSKTRKIKTLI.

The tract at residues 1-25 is disordered; it reads MSSSDRDIIDIESGEEDLYSDGGND. Positions 10 to 19 are enriched in acidic residues; sequence DIESGEEDLY. Positions 135–342 are TRIAD supradomain; the sequence is VDIQCGICFE…SDHKACNAFK (208 aa). Residues Cys139, Cys142, Cys156, His158, Cys161, Cys164, Cys184, Cys189, Cys228, Cys233, Cys251, Cys253, Cys258, Cys261, His266, Cys271, Cys298, and Cys301 each contribute to the Zn(2+) site. The RING-type 1 zinc finger occupies 139-189; sequence CGICFESYTRKEIARVSCGHPYCKTCWTGYITTKIEDGPGCLRVKCPEPSC. Residues 208–271 form an IBR-type zinc finger; sequence DKYYRYFLRS…CEDAHSPVDC (64 aa). Residues 298–328 form an RING-type 2; atypical zinc finger; that stretch reads CPKCKRPIEKNTGCNHMSCSAPCRHYFCWAC. The active site involves Cys311. Zn(2+) contacts are provided by Cys316, Cys320, Cys325, Cys328, His335, and Cys338.

The protein belongs to the RBR family. Ariadne subfamily. Zn(2+) is required as a cofactor.

The enzyme catalyses [E2 ubiquitin-conjugating enzyme]-S-ubiquitinyl-L-cysteine + [acceptor protein]-L-lysine = [E2 ubiquitin-conjugating enzyme]-L-cysteine + [acceptor protein]-N(6)-ubiquitinyl-L-lysine.. The protein operates within protein modification; protein ubiquitination. In terms of biological role, might act as an E3 ubiquitin-protein ligase, or as part of E3 complex, which accepts ubiquitin from specific E2 ubiquitin-conjugating enzymes and then transfers it to substrates. The sequence is that of Probable E3 ubiquitin-protein ligase ARI11 (ARI11) from Arabidopsis thaliana (Mouse-ear cress).